The sequence spans 278 residues: Sulfur carrier protein FdhD (278 aa).

The active-site Cysteine persulfide intermediate is the C121. Residue 260-265 participates in Mo-bis(molybdopterin guanine dinucleotide) binding; the sequence is FCKPGR.

Belongs to the FdhD family.

Its subcellular location is the cytoplasm. Required for formate dehydrogenase (FDH) activity. Acts as a sulfur carrier protein that transfers sulfur from IscS to the molybdenum cofactor prior to its insertion into FDH. This chain is Sulfur carrier protein FdhD, found in Escherichia coli O127:H6 (strain E2348/69 / EPEC).